Reading from the N-terminus, the 323-residue chain is RNA polymerase sigma factor SigB (323 aa).

Residues 1–228 (MADAPTRATT…DMPVGSEEEA (228 aa)) form a sufficient to interact with RbpA region. Residues 25–59 (DLVRVYLNGIGKTALLNAAGEVELAKRIEAGLYAE) form a sigma-70 factor domain-1 region. The segment at 90–160 (LLEANLRLVV…TRGMADQSRT (71 aa)) is sigma-70 factor domain-2. The Polymerase core binding motif lies at 114–117 (DLIQ). The interval 169-245 (EQVNKLARIK…DAEAMSAENA (77 aa)) is sigma-70 factor domain-3. The sigma-70 factor domain-4 stretch occupies residues 258 to 311 (VLATLDEREHQVIRLRFGLDDGQPRTLDQIGKLFGLSRERVRQIERDVMSKLRH). A DNA-binding region (H-T-H motif) is located at residues 284–303 (LDQIGKLFGLSRERVRQIER).

It belongs to the sigma-70 factor family. In terms of assembly, monomer. Interacts transiently with the RNA polymerase catalytic core formed by RpoA, RpoB, RpoC and RpoZ (2 alpha, 1 beta, 1 beta' and 1 omega subunit) to form the RNA polymerase holoenzyme that can initiate transcription.

Functionally, sigma factors are initiation factors that promote the attachment of RNA polymerase to specific initiation sites and are then released. A non-essential principal sigma factor that responds to cell envelope stress and hypoxia. This Mycobacterium tuberculosis (strain CDC 1551 / Oshkosh) protein is RNA polymerase sigma factor SigB (sigB).